An 82-amino-acid chain; its full sequence is Putative membrane protein insertion efficiency factor (82 aa).

The interval 61-82 (HEGGYDPVPKRKNKNSEGKREE) is disordered.

It belongs to the UPF0161 family.

It localises to the cell inner membrane. Could be involved in insertion of integral membrane proteins into the membrane. The polypeptide is Putative membrane protein insertion efficiency factor (Fusobacterium nucleatum subsp. nucleatum (strain ATCC 25586 / DSM 15643 / BCRC 10681 / CIP 101130 / JCM 8532 / KCTC 2640 / LMG 13131 / VPI 4355)).